The sequence spans 958 residues: UPF0182 protein TW644 (958 aa).

A run of 7 helical transmembrane segments spans residues 14–34 (IAIL…FFLV), 59–79 (IFVV…LCMF), 107–127 (KIVV…FAAS), 166–186 (LFFL…ISVV), 205–225 (VQYA…FWLN), 249–269 (LIPG…LFCI), and 280–300 (IIGV…LPWG).

The protein belongs to the UPF0182 family.

It localises to the cell membrane. The chain is UPF0182 protein TW644 from Tropheryma whipplei (strain TW08/27) (Whipple's bacillus).